A 252-amino-acid polypeptide reads, in one-letter code: Redox-sensing transcriptional repressor Rex (252 aa).

Residues 26–65 (LYLRALTALSERSVPTVSSEELAAAAGVNSAKLRKDFSYL) constitute a DNA-binding region (H-T-H motif). An NAD(+)-binding site is contributed by 100-105 (GIGNLG). Residues 222–252 (EAAAEGAIPAAASKESADKGPDGDVPAVMPA) form a disordered region.

The protein belongs to the transcriptional regulatory Rex family. Homodimer.

The protein resides in the cytoplasm. In terms of biological role, modulates transcription in response to changes in cellular NADH/NAD(+) redox state. The polypeptide is Redox-sensing transcriptional repressor Rex (Streptomyces avermitilis (strain ATCC 31267 / DSM 46492 / JCM 5070 / NBRC 14893 / NCIMB 12804 / NRRL 8165 / MA-4680)).